We begin with the raw amino-acid sequence, 160 residues long: Cytochrome b6-f complex subunit 4 (160 aa).

The next 3 membrane-spanning stretches (helical) occupy residues 36–56 (LLYIFPVVILGTIACNVGLAV), 95–115 (LLGVLLMVSVPTGLLTVPFLE), and 131–151 (TVFLFGTALSLWLGIGATLPI).

It belongs to the cytochrome b family. PetD subfamily. In terms of assembly, the 4 large subunits of the cytochrome b6-f complex are cytochrome b6, subunit IV (17 kDa polypeptide, petD), cytochrome f and the Rieske protein, while the 4 small subunits are petG, petL, petM and petN. The complex functions as a dimer.

The protein localises to the plastid. It localises to the chloroplast thylakoid membrane. In terms of biological role, component of the cytochrome b6-f complex, which mediates electron transfer between photosystem II (PSII) and photosystem I (PSI), cyclic electron flow around PSI, and state transitions. The protein is Cytochrome b6-f complex subunit 4 of Amborella trichopoda.